The following is a 363-amino-acid chain: Peptide chain release factor 1 (363 aa).

At Gln237 the chain carries N5-methylglutamine. A compositionally biased stretch (basic and acidic residues) spans 284–296 (EDEKRRSAEESTR). Positions 284 to 305 (EDEKRRSAEESTRRSLVASGDR) are disordered.

The protein belongs to the prokaryotic/mitochondrial release factor family. In terms of processing, methylated by PrmC. Methylation increases the termination efficiency of RF1.

It localises to the cytoplasm. Its function is as follows. Peptide chain release factor 1 directs the termination of translation in response to the peptide chain termination codons UAG and UAA. The protein is Peptide chain release factor 1 of Shewanella sp. (strain MR-4).